A 219-amino-acid polypeptide reads, in one-letter code: Claudin-20 (219 aa).

The Cytoplasmic portion of the chain corresponds to 1-7 (MASAGLQ). Residues 8-28 (LLAFILALSGVSGVLTATLLP) form a helical membrane-spanning segment. Over 29–81 (NWKVNVDVDSNIITAIVQLHGLWMDCTWYSTGMFSCALKHSILSLPIHVQAAR) the chain is Extracellular. A helical transmembrane segment spans residues 82–102 (ATMVLACVLSALGICTSTVGM). Over 103-118 (KCTRLGGDRETKSHAS) the chain is Cytoplasmic. The chain crosses the membrane as a helical span at residues 119-139 (FAGGVCFMSAGISSLISTVWY). The Extracellular portion of the chain corresponds to 140-160 (TKEIIANFLDLTVPESNKHEP). The chain crosses the membrane as a helical span at residues 161–181 (GGAIYIGFISAMLLFISGMIF). Topologically, residues 182 to 219 (CTSCIKRNPEARLDPPTQQPISNTQLENNSTHNLKDYV) are cytoplasmic. Residues 193-219 (RLDPPTQQPISNTQLENNSTHNLKDYV) are disordered. Residues 200 to 213 (QPISNTQLENNSTH) show a composition bias toward polar residues.

Belongs to the claudin family.

The protein resides in the cell junction. It localises to the tight junction. Its subcellular location is the cell membrane. Functionally, plays a major role in tight junction-specific obliteration of the intercellular space, through calcium-independent cell-adhesion activity. The sequence is that of Claudin-20 (CLDN20) from Homo sapiens (Human).